Consider the following 231-residue polypeptide: Large ribosomal subunit protein uL1 (231 aa).

Belongs to the universal ribosomal protein uL1 family. Part of the 50S ribosomal subunit.

In terms of biological role, binds directly to 23S rRNA. The L1 stalk is quite mobile in the ribosome, and is involved in E site tRNA release. Functionally, protein L1 is also a translational repressor protein, it controls the translation of the L11 operon by binding to its mRNA. This is Large ribosomal subunit protein uL1 from Pseudomonas putida (strain ATCC 700007 / DSM 6899 / JCM 31910 / BCRC 17059 / LMG 24140 / F1).